We begin with the raw amino-acid sequence, 455 residues long: Succinyl-CoA--L-malate CoA-transferase alpha subunit (455 aa).

The segment at 1 to 58 is disordered; sequence MAKASRLTRSTGQPTEVSEGQVTGTSEMPPTGEEPSGHAESKPPASDPMSTPGTGQEQ. 2 stretches are compositionally biased toward polar residues: residues 7 to 28 and 48 to 58; these read LTRSTGQPTEVSEGQVTGTSEM and PMSTPGTGQEQ. D227 acts as the Nucleophile in catalysis.

This sequence belongs to the CoA-transferase III family. In terms of assembly, forms a large complex composed of six heterodimers (alpha, beta).

The enzyme catalyses succinyl-CoA + (S)-malate = (S)-malyl-CoA + succinate. It catalyses the reaction (3S)-citramalate + succinyl-CoA = (3S)-citramalyl-CoA + succinate. In terms of biological role, involved in the 3-hydroxypropionate cycle used for autotrophic carbon dioxide fixation. Catalyzes the transfer of CoA moiety from succinyl-CoA to L-malate to yield L-malyl-CoA. The protein is Succinyl-CoA--L-malate CoA-transferase alpha subunit (smtA) of Chloroflexus aurantiacus (strain ATCC 29366 / DSM 635 / J-10-fl).